A 424-amino-acid chain; its full sequence is Na(+)/H(+) antiporter NhaP (424 aa).

12 helical membrane passes run 3 to 23 (DLVA…YRFI), 25 to 45 (LPPT…VQGL), 66 to 86 (FSEV…ALHV), 96 to 116 (WPIG…IGGL), 130 to 152 (FIYC…LGIL), 170 to 190 (LFND…LQLG), 200 to 220 (ILFV…GYGV), 246 to 266 (ALAA…GLII), 296 to 316 (ALLF…WLHV), 320 to 340 (FALG…AILV), 358 to 378 (ILVW…SLPL), and 384 to 404 (LILS…GLSI).

The protein belongs to the monovalent cation:proton antiporter 1 (CPA1) transporter (TC 2.A.36) family.

It localises to the cell inner membrane. Inhibited by amiloride. Its function is as follows. Na(+)/H(+) antiporter that extrudes sodium in exchange for external protons. Also has weak Li(+)/H(+) antiport activity. This chain is Na(+)/H(+) antiporter NhaP (nhaP), found in Pseudomonas aeruginosa (strain ATCC 15692 / DSM 22644 / CIP 104116 / JCM 14847 / LMG 12228 / 1C / PRS 101 / PAO1).